We begin with the raw amino-acid sequence, 239 residues long: Probable 2-phosphosulfolactate phosphatase (239 aa).

This sequence belongs to the ComB family. Requires Mg(2+) as cofactor.

The catalysed reaction is (2R)-O-phospho-3-sulfolactate + H2O = (2R)-3-sulfolactate + phosphate. This is Probable 2-phosphosulfolactate phosphatase from Clostridium botulinum (strain Loch Maree / Type A3).